Consider the following 489-residue polypeptide: Homoserine O-acetyltransferase (489 aa).

In terms of domain architecture, AB hydrolase-1 spans 47–354 (NAILVCHALT…NYGHDSFLLE (308 aa)). Ser152 (nucleophile) is an active-site residue. Arg221 contacts substrate. Residues Asp315 and His348 contribute to the active site. Asp349 lines the substrate pocket. CBS domains follow at residues 375-434 (MIED…NLEE) and 436-489 (MTKN…IEEF).

This sequence belongs to the AB hydrolase superfamily. MetX family. In terms of assembly, homodimer.

It is found in the cytoplasm. It carries out the reaction L-homoserine + acetyl-CoA = O-acetyl-L-homoserine + CoA. Its pathway is amino-acid biosynthesis; L-methionine biosynthesis via de novo pathway; O-acetyl-L-homoserine from L-homoserine: step 1/1. Its function is as follows. Transfers an acetyl group from acetyl-CoA to L-homoserine, forming acetyl-L-homoserine. This chain is Homoserine O-acetyltransferase, found in Methanohalobium evestigatum (strain ATCC BAA-1072 / DSM 3721 / NBRC 107634 / OCM 161 / Z-7303).